The sequence spans 90 residues: Probable Fe(2+)-trafficking protein (90 aa).

The protein belongs to the Fe(2+)-trafficking protein family.

Its function is as follows. Could be a mediator in iron transactions between iron acquisition and iron-requiring processes, such as synthesis and/or repair of Fe-S clusters in biosynthetic enzymes. The polypeptide is Probable Fe(2+)-trafficking protein (Aeromonas hydrophila subsp. hydrophila (strain ATCC 7966 / DSM 30187 / BCRC 13018 / CCUG 14551 / JCM 1027 / KCTC 2358 / NCIMB 9240 / NCTC 8049)).